Consider the following 62-residue polypeptide: SPbeta prophage-derived uncharacterized protein YonU (62 aa).

The stretch at 1-32 forms a coiled coil; sequence MEKKFLDAIQQLTKELEMLKKDIDSIKEATVR.

The chain is SPbeta prophage-derived uncharacterized protein YonU (yonU) from Bacillus subtilis (strain 168).